The chain runs to 61 residues: UPF0312 protein (61 aa).

Belongs to the UPF0312 family.

The protein is UPF0312 protein of Delftia acidovorans (Pseudomonas acidovorans).